Reading from the N-terminus, the 222-residue chain is DnaJ homolog subfamily B member 9 (222 aa).

Positions 1–23 (MATPQSVFVFAICILMITELILA) are cleaved as a signal peptide. A J domain is found at 26–90 (NYYDILGVPK…NRRKEYDIIG (65 aa)). The segment at 91–222 (HSAFTNGKGQ…VTTYTDCSGQ (132 aa)) is divergent targeting domain. Serine 133 is modified (phosphoserine).

As to quaternary structure, interacts with HSPA5/BiP; interaction is direct. Interacts with ERN1/IRE1 (via the luminal region). Interacts with DERL1.

It is found in the endoplasmic reticulum lumen. Its function is as follows. Co-chaperone for Hsp70 protein HSPA5/BiP that acts as a key repressor of the ERN1/IRE1-mediated unfolded protein response (UPR). J domain-containing co-chaperones stimulate the ATPase activity of Hsp70 proteins and are required for efficient substrate recognition by Hsp70 proteins. In the unstressed endoplasmic reticulum, interacts with the luminal region of ERN1/IRE1 and selectively recruits HSPA5/BiP: HSPA5/BiP disrupts the dimerization of the active ERN1/IRE1 luminal region, thereby inactivating ERN1/IRE1. Also involved in endoplasmic reticulum-associated degradation (ERAD) of misfolded proteins. Required for survival of B-cell progenitors and normal antibody production. In Rattus norvegicus (Rat), this protein is DnaJ homolog subfamily B member 9.